Consider the following 276-residue polypeptide: UPF0276 protein AM1_3026 (276 aa).

It belongs to the UPF0276 family.

The protein is UPF0276 protein AM1_3026 of Acaryochloris marina (strain MBIC 11017).